We begin with the raw amino-acid sequence, 859 residues long: Bifunctional uridylyltransferase/uridylyl-removing enzyme (859 aa).

The tract at residues methionine 1–leucine 325 is uridylyltransferase. Positions serine 326 to leucine 682 are uridylyl-removing. In terms of domain architecture, HD spans valine 444 to leucine 566. ACT domains lie at glutamine 683 to serine 762 and isoleucine 791 to valine 859.

The protein belongs to the GlnD family. The cofactor is Mg(2+).

The enzyme catalyses [protein-PII]-L-tyrosine + UTP = [protein-PII]-uridylyl-L-tyrosine + diphosphate. It catalyses the reaction [protein-PII]-uridylyl-L-tyrosine + H2O = [protein-PII]-L-tyrosine + UMP + H(+). Uridylyltransferase (UTase) activity is inhibited by glutamine, while glutamine activates uridylyl-removing (UR) activity. Its function is as follows. Modifies, by uridylylation and deuridylylation, the PII regulatory proteins (GlnB and homologs), in response to the nitrogen status of the cell that GlnD senses through the glutamine level. Under low glutamine levels, catalyzes the conversion of the PII proteins and UTP to PII-UMP and PPi, while under higher glutamine levels, GlnD hydrolyzes PII-UMP to PII and UMP (deuridylylation). Thus, controls uridylylation state and activity of the PII proteins, and plays an important role in the regulation of nitrogen fixation and metabolism. The polypeptide is Bifunctional uridylyltransferase/uridylyl-removing enzyme (Burkholderia vietnamiensis (strain G4 / LMG 22486) (Burkholderia cepacia (strain R1808))).